Reading from the N-terminus, the 122-residue chain is MIKQLDKKALRQKRHLRVRKNVRGTSEKPRLTVFKSQKHIYAQIIDDTKGVTLASASTTQKQLKEKLEKTWDENAAKEVGKLIAEKAKEKGITEIVFDRSGYKYHGKVKALAEAARETGLKF.

The protein belongs to the universal ribosomal protein uL18 family. Part of the 50S ribosomal subunit; part of the 5S rRNA/L5/L18/L25 subcomplex. Contacts the 5S and 23S rRNAs.

This is one of the proteins that bind and probably mediate the attachment of the 5S RNA into the large ribosomal subunit, where it forms part of the central protuberance. The polypeptide is Large ribosomal subunit protein uL18 (Petrotoga mobilis (strain DSM 10674 / SJ95)).